The sequence spans 354 residues: Uroporphyrinogen decarboxylase (354 aa).

Residues 30-34, F49, D79, Y156, S211, and H326 each bind substrate; that span reads RQAGR.

Belongs to the uroporphyrinogen decarboxylase family. In terms of assembly, homodimer.

Its subcellular location is the cytoplasm. The catalysed reaction is uroporphyrinogen III + 4 H(+) = coproporphyrinogen III + 4 CO2. The protein operates within porphyrin-containing compound metabolism; protoporphyrin-IX biosynthesis; coproporphyrinogen-III from 5-aminolevulinate: step 4/4. In terms of biological role, catalyzes the decarboxylation of four acetate groups of uroporphyrinogen-III to yield coproporphyrinogen-III. The chain is Uroporphyrinogen decarboxylase from Salinibacter ruber (strain DSM 13855 / M31).